A 260-amino-acid polypeptide reads, in one-letter code: Neuraminyllactose-binding hemagglutinin (260 aa).

Residues 1-27 form the signal peptide; sequence MKTNGHFKDFAWKKCFLGASVVALLVG. Residue C28 is the site of N-palmitoyl cysteine attachment. Residue C28 is the site of S-diacylglycerol cysteine attachment.

Its subcellular location is the cell outer membrane. The chain is Neuraminyllactose-binding hemagglutinin (hpaA) from Helicobacter pylori (strain J99 / ATCC 700824) (Campylobacter pylori J99).